The sequence spans 313 residues: tRNA dimethylallyltransferase (313 aa).

11–18 (GPTAAGKS) serves as a coordination point for ATP. 13–18 (TAAGKS) is a substrate binding site. Interaction with substrate tRNA stretches follow at residues 36–39 (DSAT), 160–164 (QRIQR), and 244–249 (RCVGYR).

It belongs to the IPP transferase family. As to quaternary structure, monomer. It depends on Mg(2+) as a cofactor.

The catalysed reaction is adenosine(37) in tRNA + dimethylallyl diphosphate = N(6)-dimethylallyladenosine(37) in tRNA + diphosphate. Its function is as follows. Catalyzes the transfer of a dimethylallyl group onto the adenine at position 37 in tRNAs that read codons beginning with uridine, leading to the formation of N6-(dimethylallyl)adenosine (i(6)A). This is tRNA dimethylallyltransferase from Bordetella parapertussis (strain 12822 / ATCC BAA-587 / NCTC 13253).